The following is a 77-amino-acid chain: MESFFNNSFATLIAYMGVITIYLLVIPLLLFYWMNNRWHVMGKYERLGIYGLVFLFFPGLILFSPFLNLRLKGSGKG.

A run of 2 helical transmembrane segments spans residues 12-32 (LIAY…LLFY) and 47-67 (LGIY…SPFL).

It belongs to the complex I NdhL subunit family. In terms of assembly, NDH-1 can be composed of about 15 different subunits; different subcomplexes with different compositions have been identified which probably have different functions.

Its subcellular location is the cellular thylakoid membrane. It catalyses the reaction a plastoquinone + NADH + (n+1) H(+)(in) = a plastoquinol + NAD(+) + n H(+)(out). It carries out the reaction a plastoquinone + NADPH + (n+1) H(+)(in) = a plastoquinol + NADP(+) + n H(+)(out). In terms of biological role, NDH-1 shuttles electrons from an unknown electron donor, via FMN and iron-sulfur (Fe-S) centers, to quinones in the respiratory and/or the photosynthetic chain. The immediate electron acceptor for the enzyme in this species is believed to be plastoquinone. Couples the redox reaction to proton translocation, and thus conserves the redox energy in a proton gradient. Cyanobacterial NDH-1 also plays a role in inorganic carbon-concentration. The sequence is that of NAD(P)H-quinone oxidoreductase subunit L from Prochlorococcus marinus (strain MIT 9312).